The chain runs to 564 residues: NAC domain-containing protein 16 (564 aa).

The NAC domain maps to 16 to 166 (SAPGFRFHPT…YYALYKLYKK (151 aa)). The DNA-binding element occupies 115–172 (VGLKKTLVFYRGRAPNGERTDWVMHEYTMDEEELGRCKNAKEYYALYKLYKKSGAGPK). A helical membrane pass occupies residues 535–555 (FLLLSIMGALCAIFWVFKATV).

As to expression, expressed in roots, rosette leaves, shoot apex, stems and flowers.

Its subcellular location is the membrane. The protein localises to the nucleus. Its function is as follows. Transcriptional activator activated by proteolytic cleavage through regulated intramembrane proteolysis (RIP). Transcriptional activator that promotes leaf senescence by up-regulating senescence-associated genes in response to developmental and stress-induced senescence signals. Functions in salt and oxidative stress-responsive signaling pathways. Binds to the promoter of NAC029/NAP and NAC059/ORS1 genes. The chain is NAC domain-containing protein 16 from Arabidopsis thaliana (Mouse-ear cress).